The chain runs to 1275 residues: Mediator of RNA polymerase II transcription subunit 33B (1275 aa).

The segment covering 772 to 791 (GSQSLTPSSGSSSLSTSGGD) has biased composition (low complexity). Residues 772–792 (GSQSLTPSSGSSSLSTSGGDD) form a disordered region.

The protein belongs to the Mediator complex subunit 33 family. In terms of assembly, component of the Mediator complex. As to expression, ubiquitous.

Its subcellular location is the nucleus. Its function is as follows. Component of the Mediator complex, a coactivator involved in the regulated transcription of nearly all RNA polymerase II-dependent genes. Mediator functions as a bridge to convey information from gene-specific regulatory proteins to the basal RNA polymerase II transcription machinery. The Mediator complex, having a compact conformation in its free form, is recruited to promoters by direct interactions with regulatory proteins and serves for the assembly of a functional preinitiation complex with RNA polymerase II and the general transcription factors. Involved in the repression of phenylpropanoid biosynthesis. May compete with MED33B for common binding partners or for occupancy in Mediator. This Arabidopsis thaliana (Mouse-ear cress) protein is Mediator of RNA polymerase II transcription subunit 33B (MED33B).